Consider the following 286-residue polypeptide: GTP-binding protein 8 (286 aa).

An EngB-type G domain is found at 105-278; the sequence is KQPEVCFMGR…RCFIAHVTGK (174 aa). Residues 113 to 120, 142 to 146, 160 to 163, 222 to 225, and 257 to 259 each bind GTP; these read GRSNVGKS, GHTKK, DMPG, TKID, and VSS. Residues Ser120 and Thr144 each coordinate Mg(2+).

Belongs to the TRAFAC class TrmE-Era-EngA-EngB-Septin-like GTPase superfamily. EngB GTPase family. The cofactor is Mg(2+).

The protein is GTP-binding protein 8 (gtpbp8) of Danio rerio (Zebrafish).